Consider the following 617-residue polypeptide: V-type proton ATPase catalytic subunit A (617 aa).

250-257 (GAFGCGKT) lines the ATP pocket. Residue S384 is modified to Phosphoserine; by AMPK.

Belongs to the ATPase alpha/beta chains family. In terms of assembly, V-ATPase is a heteromultimeric enzyme made up of two complexes: the ATP-hydrolytic V1 complex and the proton translocation V0 complex. The V1 complex consists of three catalytic AB heterodimers that form a heterohexamer, three peripheral stalks each consisting of EG heterodimers, one central rotor including subunits D and F, and the regulatory subunits C and H. The proton translocation complex V0 consists of the proton transport subunit a, a ring of proteolipid subunits c9c'', rotary subunit d, subunits e and f, and the accessory subunits ATP6AP1/Ac45 and ATP6AP2/PRR. Interacts with the V0 complex V-ATPase subunit a4 ATP6V0A4. Interacts with WFS1. Interacts with alpha-crystallin B chain/CRYAB and with MTOR, forming a ternary complex. Phosphorylation at Ser-384 by AMPK down-regulates its enzyme activity.

It is found in the cytoplasm. The protein resides in the cytosol. The protein localises to the cytoplasmic vesicle. It localises to the secretory vesicle. Its subcellular location is the clathrin-coated vesicle membrane. It is found in the lysosome. It carries out the reaction ATP + H2O + 4 H(+)(in) = ADP + phosphate + 5 H(+)(out). ATP hydrolysis occurs at the interface between the nucleotide-binding domains of subunits A and B. ATP hydrolysis triggers a conformational change in the subunits D and F, which induces a shift of subunit d. The c-ring is subsequently rotated and results in a continuous proton translocation across the membrane. Catalytic subunit of the V1 complex of vacuolar(H+)-ATPase (V-ATPase), a multisubunit enzyme composed of a peripheral complex (V1) that hydrolyzes ATP and a membrane integral complex (V0) that translocates protons. V-ATPase is responsible for acidifying and maintaining the pH of intracellular compartments and in some cell types, is targeted to the plasma membrane, where it is responsible for acidifying the extracellular environment. In aerobic conditions, involved in intracellular iron homeostasis, thus triggering the activity of Fe(2+) prolyl hydroxylase (PHD) enzymes, and leading to HIF1A hydroxylation and subsequent proteasomal degradation. May play a role in neurite development and synaptic connectivity. The polypeptide is V-type proton ATPase catalytic subunit A (Atp6v1a) (Mus musculus (Mouse)).